The following is a 674-amino-acid chain: Dymeclin (674 aa).

G2 carries N-myristoyl glycine lipidation.

This sequence belongs to the dymeclin family. As to quaternary structure, interacts with GOLM1 and PPIB. In terms of processing, myristoylated in vitro; myristoylation is not essential for protein targeting to Golgi compartment.

It localises to the cytoplasm. The protein localises to the golgi apparatus. Its subcellular location is the membrane. In terms of biological role, necessary for correct organization of Golgi apparatus. Involved in bone development. In Rattus norvegicus (Rat), this protein is Dymeclin (Dym).